The sequence spans 235 residues: NADH-quinone oxidoreductase subunit C (235 aa).

This sequence belongs to the complex I 30 kDa subunit family. In terms of assembly, NDH-1 is composed of 14 different subunits. Subunits NuoB, C, D, E, F, and G constitute the peripheral sector of the complex.

The protein resides in the cell membrane. It catalyses the reaction a quinone + NADH + 5 H(+)(in) = a quinol + NAD(+) + 4 H(+)(out). Its function is as follows. NDH-1 shuttles electrons from NADH, via FMN and iron-sulfur (Fe-S) centers, to quinones in the respiratory chain. The immediate electron acceptor for the enzyme in this species is believed to be a menaquinone. Couples the redox reaction to proton translocation (for every two electrons transferred, four hydrogen ions are translocated across the cytoplasmic membrane), and thus conserves the redox energy in a proton gradient. This chain is NADH-quinone oxidoreductase subunit C, found in Mycolicibacterium paratuberculosis (strain ATCC BAA-968 / K-10) (Mycobacterium paratuberculosis).